A 337-amino-acid chain; its full sequence is MRRGWKMALSGGLRCCRRVLSWVPVLVIVLVVLWSYYAYVFELCLVTVLSPAEKVIYLILYHAIFVFFAWTYWKSIFTLPQQPNQKFHLSYTDKERYKNEERPEVQKQMLVDMAKKLPVYTRTGSGAVRFCDRCHLIKPDRCHHCSVCAMCVLKMDHHCPWVNNCIGFSNYKFFLQFLAYSVLYCLYIATTVFSYFIKYWRGELPSVRSKFHVLFLLFVACMFFVSLVILFGYHCWLVSRNKTTLEAFCTPVFTSGPEKNGFNLGFIKNIQQVFGDNKKFWLIPIGSSPGDGHSFPMRSMNESQNPLLANEEPWEDNEDDSRDYPEGSSSLAVESET.

Topologically, residues 1–20 (MRRGWKMALSGGLRCCRRVL) are cytoplasmic. The chain crosses the membrane as a helical span at residues 21–41 (SWVPVLVIVLVVLWSYYAYVF). Topologically, residues 42–56 (ELCLVTVLSPAEKVI) are lumenal. The chain crosses the membrane as a helical span at residues 57-77 (YLILYHAIFVFFAWTYWKSIF). The Cytoplasmic portion of the chain corresponds to 78–172 (TLPQQPNQKF…NNCIGFSNYK (95 aa)). Positions 129 to 179 (RFCDRCHLIKPDRCHHCSVCAMCVLKMDHHCPWVNNCIGFSNYKFFLQFLA) constitute a DHHC domain. Zn(2+)-binding residues include C131, C134, H144, C145, C148, C151, and H158. The S-palmitoyl cysteine intermediate role is filled by C159. Zn(2+) is bound at residue C165. A helical transmembrane segment spans residues 173–193 (FFLQFLAYSVLYCLYIATTVF). The Lumenal portion of the chain corresponds to 194 to 210 (SYFIKYWRGELPSVRSK). Residues 211-234 (FHVLFLLFVACMFFVSLVILFGYH) traverse the membrane as a helical segment. The Cytoplasmic segment spans residues 235-337 (CWLVSRNKTT…SSSLAVESET (103 aa)). The segment at 293–337 (HSFPMRSMNESQNPLLANEEPWEDNEDDSRDYPEGSSSLAVESET) is disordered. The segment covering 312 to 321 (EPWEDNEDDS) has biased composition (acidic residues). The span at 327-337 (GSSSLAVESET) shows a compositional bias: polar residues.

Belongs to the DHHC palmitoyltransferase family. Autopalmitoylated (in vitro). As to expression, expressed mainly in brain.

It localises to the golgi apparatus membrane. It is found in the postsynaptic density. It catalyses the reaction L-cysteinyl-[protein] + hexadecanoyl-CoA = S-hexadecanoyl-L-cysteinyl-[protein] + CoA. The catalysed reaction is L-cysteinyl-[protein] + tetradecanoyl-CoA = S-tetradecanoyl-L-cysteinyl-[protein] + CoA. The enzyme catalyses L-cysteinyl-[protein] + octadecanoyl-CoA = S-octadecanoyl-L-cysteinyl-[protein] + CoA. Inhibited by 2-bromopalmitate. Functionally, palmitoyltransferase that catalyzes the addition of palmitate onto various protein substrates. Has no stringent fatty acid selectivity and in addition to palmitate can also transfer onto target proteins myristate from tetradecanoyl-CoA and stearate from octadecanoyl-CoA. Palmitoylates IGF2R and SORT1, promoting their partitioning to an endosomal membrane subdomain where they can interact with the retromer cargo-selective complex. Thereby, regulates retrograde transport from endosomes to the Golgi apparatus of these lysosomal sorting receptors and plays a role in trafficking of lysosomal proteins. In the nervous system, catalyzes the palmitoylation of DLG4/PSD95 and regulates its synaptic clustering and function in synaptogenesis. Could be involved in the differentiation of dopaminergic neurons and the development of the diencephalon. Could also catalyze the palmitoylation of GAP43. Could also palmitoylate DNAJC5 and regulate its localization to the Golgi membrane. Could also palmitoylate FYN as shown in vitro. May palmitoylate CALHM3 subunit of gustatory voltage-gated ion channels and modulate channel gating and kinetics. The polypeptide is Palmitoyltransferase ZDHHC15 (Mus musculus (Mouse)).